A 377-amino-acid polypeptide reads, in one-letter code: Chaperone protein DnaJ (377 aa).

Residues 5–70 (DYYQVLGVSR…KKRSAYDQLG (66 aa)) enclose the J domain. The CR-type zinc finger occupies 138–216 (GVTKIISFKT…CYGEGRYINT (79 aa)). Positions 151, 154, 168, 171, 190, 193, 204, and 207 each coordinate Zn(2+). CXXCXGXG motif repeat units lie at residues 151–158 (CDACAGKG), 168–175 (CPTCRGSG), 190–197 (CQTCRGAG), and 204–211 (CTKCYGEG).

It belongs to the DnaJ family. Homodimer. The cofactor is Zn(2+).

It is found in the cytoplasm. Its function is as follows. Participates actively in the response to hyperosmotic and heat shock by preventing the aggregation of stress-denatured proteins and by disaggregating proteins, also in an autonomous, DnaK-independent fashion. Unfolded proteins bind initially to DnaJ; upon interaction with the DnaJ-bound protein, DnaK hydrolyzes its bound ATP, resulting in the formation of a stable complex. GrpE releases ADP from DnaK; ATP binding to DnaK triggers the release of the substrate protein, thus completing the reaction cycle. Several rounds of ATP-dependent interactions between DnaJ, DnaK and GrpE are required for fully efficient folding. Also involved, together with DnaK and GrpE, in the DNA replication of plasmids through activation of initiation proteins. The chain is Chaperone protein DnaJ from Orientia tsutsugamushi (strain Boryong) (Rickettsia tsutsugamushi).